Here is a 1019-residue protein sequence, read N- to C-terminus: Clotting factor C (1019 aa).

The first 25 residues, 1–25 (MVLASFLVSGLVLGILAQQMRPVQS), serve as a signal peptide directing secretion. The region spanning 102-137 (YGTWCSGECQCKNGGICDQRTGACTCRDRYEGAHCE) is the EGF-like domain. 16 disulfide bridges follow: C110/C118, C112/C125, C127/C136, C142/C182, C168/C195, C199/C241, C227/C254, C260/C308, C294/C321, C331/C350, C354/C374, C464/C564, C538/C556, C576/C621, C607/C634, and C720/C748. Sushi domains lie at 140–197 (KGCP…KCIR), 198–256 (ECAK…QCKK), and 258–323 (VFCP…SCVK). Residues 325-421 (ADREVDCDSK…EELKSLARSF (97 aa)) form the LCCL domain. The 133-residue stretch at 436 to 568 (CPDGWFEVEE…PSSFACMMDL (133 aa)) folds into the C-type lectin domain. N523 and N534 each carry an N-linked (GlcNAc...) asparagine glycan. 2 Sushi domains span residues 574-636 (AKCD…RCIK) and 689-750 (PRSS…SCIP). N-linked (GlcNAc...) asparagine glycans are attached at residues N624, N740, and N767. In terms of domain architecture, Peptidase S1 spans 763-1019 (IWNGNSTEIG…VFLSWIRQFI (257 aa)). C794 and C810 are disulfide-bonded. Residues H809 and D865 each act as charge relay system in the active site. A glycan (N-linked (GlcNAc...) asparagine) is linked at N912. Residues C932 and C951 are joined by a disulfide bond. A substrate-binding site is contributed by D960. C962 and C996 are joined by a disulfide. S966 serves as the catalytic Charge relay system.

This sequence belongs to the peptidase S1 family. In terms of assembly, heterodimer of a light chain and a heavy chain linked by a disulfide bond. Forms a covalent heterodimer with intracellular coagulation inhibitor 1/LICI-1. Forms a covalent heterodimer with intracellular coagulation inhibitor 2/LICI-2. In terms of processing, N-glycosylated. Post-translationally, lipopolysaccharide (LPS) activates clotting factor C by inducing the proteolytic cleavage of the clotting factor C light chain into clotting factor C chains A and B. Clotting factor C chains heavy, A and B remain associated via interchain disulfide bonds. In terms of tissue distribution, expressed in hemocytes (at protein level).

It is found in the secreted. It catalyses the reaction Selective cleavage of 103-Arg-|-Ser-104 and 124-Ile-|-Ile-125 bonds in Limulus clotting factor B to form activated factor B. Cleavage of -Pro-Arg-|-Xaa- bonds in synthetic substrates.. With respect to regulation, activated by Gram-negative bacterial lipopolysaccharides. Inhibited by intracellular coagulation inhibitor 1/LICI-1 and to a lesser extent by intracellular coagulation inhibitors 2/LICI-2 and 3/LICI-3. Inhibited by the small molecule diisopropyl fluorophosphate (DFP). In terms of biological role, this enzyme is closely associated with an endotoxin-sensitive hemolymph coagulation system which may play important roles in both hemostasis and host defense mechanisms. Its active form catalyzes the activation of clotting factor B. In Tachypleus tridentatus (Japanese horseshoe crab), this protein is Clotting factor C.